The following is a 582-amino-acid chain: Putative frv operon regulatory protein (582 aa).

Residues 20–39 constitute a DNA-binding region (H-T-H motif); sequence PGELAQQTGVSGRTILRDID. In terms of domain architecture, PTS EIIA type-2 spans 443–582; the sequence is RFFSAPGSFH…EAFMELLHKG (140 aa). Residue H505 is modified to Phosphohistidine; by HPr.

Its function is as follows. Could be involved in the regulation of the transcription of the FRV operon. The sequence is that of Putative frv operon regulatory protein (frvR) from Escherichia coli (strain K12).